The following is a 146-amino-acid chain: 3-dehydroquinate dehydratase (146 aa).

Tyrosine 23 functions as the Proton acceptor in the catalytic mechanism. Substrate is bound by residues asparagine 74, histidine 80, and aspartate 87. The Proton donor role is filled by histidine 100. Residues isoleucine 101–serine 102 and arginine 111 contribute to the substrate site.

It belongs to the type-II 3-dehydroquinase family. Homododecamer.

It catalyses the reaction 3-dehydroquinate = 3-dehydroshikimate + H2O. Its pathway is metabolic intermediate biosynthesis; chorismate biosynthesis; chorismate from D-erythrose 4-phosphate and phosphoenolpyruvate: step 3/7. Catalyzes a trans-dehydration via an enolate intermediate. This chain is 3-dehydroquinate dehydratase, found in Bacillus mycoides (strain KBAB4) (Bacillus weihenstephanensis).